A 465-amino-acid polypeptide reads, in one-letter code: D(1C) dopamine receptor (465 aa).

Topologically, residues 1-30 (MENFSIFNVTVNVWHADLDVGNSDLSLRAL) are extracellular. N-linked (GlcNAc...) asparagine glycosylation is found at N3 and N8. A helical transmembrane segment spans residues 31–54 (TGLLLSLLILSTLLGNTLVCLAVI). The Cytoplasmic segment spans residues 55–65 (KFRHLRSKVTN). The helical transmembrane segment at 66–92 (FFVISLAVSDLFVALLVMPWKAVTEVA) threads the bilayer. Over 93-101 (GFWVFGDFC) the chain is Extracellular. A disulfide bridge links C101 with C187. A helical membrane pass occupies residues 102–124 (DTWVAFDIMCSTASILNLCIISL). Residues 125 to 143 (DRYWAIASPFRYERKMTQR) are Cytoplasmic-facing. The helical transmembrane segment at 144–168 (VAFIMIGVAWTLSILISFIPVQLSW) threads the bilayer. Residues 169 to 193 (HKSHEADEELNGVNHTENCDSSLNR) lie on the Extracellular side of the membrane. A helical membrane pass occupies residues 194–219 (TYAISSSLISFYIPVVIMIGTYTRIY). The Cytoplasmic portion of the chain corresponds to 220–264 (RIAQTQIRRISSLERAVEHAQRCSSRLSNENSLKTSFRKETKVLK). The helical transmembrane segment at 265-291 (TLSIIMGVFVFCWLPFFVLNCMIPFCH) threads the bilayer. Residues 292-309 (MNLPGQNEPEPPCVSETT) are Extracellular-facing. Residues 310 to 334 (FNIFVWFGWANSSLNPVIYAFNADF) traverse the membrane as a helical segment. The Cytoplasmic portion of the chain corresponds to 335–465 (RKAFTTILGC…EDRHYTTKLY (131 aa)). Residue C344 is the site of S-palmitoyl cysteine attachment.

Belongs to the G-protein coupled receptor 1 family. As to expression, brain and kidney.

Its subcellular location is the cell membrane. It localises to the cell projection. The protein localises to the cilium membrane. Functionally, this is one of the five types (D1 to D5) of receptors for dopamine. The activity of this receptor is mediated by G proteins which activate adenylyl cyclase. In Xenopus laevis (African clawed frog), this protein is D(1C) dopamine receptor (drd1c).